The sequence spans 768 residues: ATP-dependent zinc metalloprotease FtsH (768 aa).

Residues 1–33 (MADRDKNDIRKRLEELRKDNNRRNNRQDNGNRS) are Cytoplasmic-facing. A helical transmembrane segment spans residues 34-54 (PFSGFLFFIFVILLFTFTLLF). Over 55–139 (HRDIQTYFQE…KLNSLQPSGG (85 aa)) the chain is Periplasmic. A helical transmembrane segment spans residues 140-160 (GFFLLLLGQFLPMIIMIGLMV). Residues 161-768 (YLAKKMVGGS…SNFKLPSFME (608 aa)) lie on the Cytoplasmic side of the membrane. ATP is bound at residue 238-245 (GRPGTGKT). Residue His-461 participates in Zn(2+) binding. The active site involves Glu-462. Positions 465 and 536 each coordinate Zn(2+). Positions 647–768 (EESIQKGSEG…SNFKLPSFME (122 aa)) are disordered. The span at 669–698 (QENKTVEAEVHDSNLKSDTEKLAEAVREIT) shows a compositional bias: basic and acidic residues. The segment covering 715 to 731 (KDSDDNEKNDDDNENSD) has biased composition (acidic residues).

It in the central section; belongs to the AAA ATPase family. In the C-terminal section; belongs to the peptidase M41 family. In terms of assembly, homohexamer. The cofactor is Zn(2+).

It is found in the cell inner membrane. Functionally, acts as a processive, ATP-dependent zinc metallopeptidase for both cytoplasmic and membrane proteins. Plays a role in the quality control of integral membrane proteins. This chain is ATP-dependent zinc metalloprotease FtsH, found in Leptotrichia buccalis (strain ATCC 14201 / DSM 1135 / JCM 12969 / NCTC 10249 / C-1013-b).